Consider the following 658-residue polypeptide: MPSSVTKHTIPPFYACYFLRSLSTPGTTYIGSTPAPPRRKRQHNGHLTQGAYKTSRARPWEMECIVYGFSSKIAALQFEWAWAKPHLSRHLKFLTTEHSVDGTPKNTSDWAGMSLFPSTSLTPGQTRWGRPKKRMARPPSSPNARLLAMRALLRSEPFCGWGLKLAFFTEWSWLAYQRLDACDPGLVAKSALSTLQNRYSRSGKPLHALYPVAVCDFSGVDGKREPLVHVSEPYRLDAGVAEHPVKKRQTSSRQKPHTEETSAWPETLPRSANLKGLDACMQDFATFPIPQPAAPNTDLTKKSKRAKKLSDKARPSALEDHDAENGVDDDDTEVEVVATDAANGSDLALSRPLYRMRFDDLNMEESEWKRFAESIAANVGASRSTTQAMSEFLHTCVQRHIAAQDARTANTALPAPTSLCSLCSIPIDLSQQLDFVLCPNPHASTLPLISSSSTASHETISECRETGCDSIFHLSCLARSFLEQQLGDQKATASSASTVLPTHGTCPCHRGEHKEPTMWADVVRAMYRRHERFERLIQFLIRSGRSLEQHLHPPLEVEMTVKGSKIKERVKASVKATEDAQVDIGDQRQVISGTTSRTKAALTRKRRQPTTSSVNAIQVDPLARNGSKIDGDGAGKDTKKNTTQKAKSNETSEVIDLT.

A GIY-YIG domain is found at 12-92 (PFYACYFLRS…AKPHLSRHLK (81 aa)). Disordered regions lie at residues 29-52 (YIGSTPAPPRRKRQHNGHLTQGAY), 239-269 (GVAEHPVKKRQTSSRQKPHTEETSAWPETLP), 288-328 (PIPQ…NGVD), and 594-658 (TTSR…IDLT). Composition is skewed to basic and acidic residues over residues 308 to 324 (KLSDKARPSALEDHDAE) and 627 to 640 (SKIDGDGAGKDTKK). Residues 641–652 (NTTQKAKSNETS) show a composition bias toward polar residues.

Belongs to the SLX1 family. As to quaternary structure, forms a heterodimer with SLX4. The cofactor is a divalent metal cation.

Its subcellular location is the nucleus. Functionally, catalytic subunit of the SLX1-SLX4 structure-specific endonuclease that resolves DNA secondary structures generated during DNA repair and recombination. Has endonuclease activity towards branched DNA substrates, introducing single-strand cuts in duplex DNA close to junctions with ss-DNA. This Mycosarcoma maydis (Corn smut fungus) protein is Structure-specific endonuclease subunit SLX1.